The sequence spans 100 residues: Small ribosomal subunit protein uS14c (100 aa).

It belongs to the universal ribosomal protein uS14 family. As to quaternary structure, part of the 30S ribosomal subunit.

Its subcellular location is the plastid. Its function is as follows. Binds 16S rRNA, required for the assembly of 30S particles. The chain is Small ribosomal subunit protein uS14c from Epifagus virginiana (Beechdrops).